The primary structure comprises 156 residues: uncharacterized protein (156 aa).

Positions Met1 to Ala18 are cleaved as a signal peptide. Residues Gln19–Lys156 form the Thioredoxin domain. A disulfide bond links Cys54 and Cys57.

This sequence belongs to the thioredoxin family.

This is an uncharacterized protein from Haemophilus influenzae (strain ATCC 51907 / DSM 11121 / KW20 / Rd).